Reading from the N-terminus, the 492-residue chain is Membrane-bound glycerophospholipid O-acyltransferase 1 (492 aa).

6 helical membrane passes run 33-53, 69-89, 125-145, 179-199, 237-257, and 296-316; these read VNFV…RIYL, ILGI…LFVL, IYIF…MIVT, PSLL…AGPC, MGAV…FLTL, and YFAW…FNGM. Active-site residues include N349 and H380. The next 3 helical transmembrane spans lie at 370 to 390, 423 to 443, and 452 to 472; these read VLTF…YFTF, VVTW…FVML, and YKSV…FLPI. Residue S486 is modified to Phosphoserine.

Belongs to the membrane-bound acyltransferase family. Highly expressed in stomach, epididymis, and colon.

It is found in the endoplasmic reticulum membrane. It catalyses the reaction a 1-acyl-sn-glycero-3-phosphoethanolamine + an acyl-CoA = a 1,2-diacyl-sn-glycero-3-phosphoethanolamine + CoA. The catalysed reaction is a 1-acyl-sn-glycero-3-phospho-L-serine + an acyl-CoA = a 1,2-diacyl-sn-glycero-3-phospho-L-serine + CoA. The enzyme catalyses a 1-acyl-sn-glycero-3-phosphocholine + an acyl-CoA = a 1,2-diacyl-sn-glycero-3-phosphocholine + CoA. It carries out the reaction a 1-O-(1Z-alkenyl)-sn-glycero-3-phosphoethanolamine + (9Z)-octadecenoyl-CoA = 1-O-(1Z)-alkenyl-2-(9Z)-octadecenoyl-sn-glycero-3-phosphoethanolamine + CoA. It catalyses the reaction 1-octadecanoyl-sn-glycero-3-phosphoethanolamine + (9Z)-octadecenoyl-CoA = 1-octadecanoyl-2-(9Z-octadecenoyl)-sn-glycero-3-phosphoethanolamine + CoA. The catalysed reaction is 1-(9Z-octadecenoyl)-sn-glycero-3-phospho-L-serine + (9Z)-octadecenoyl-CoA = 1,2-di-(9Z)-octadecenoyl-sn-glycero-3-phospho-L-serine + CoA. The enzyme catalyses 1-(9Z-octadecenoyl)-sn-glycero-3-phosphoethanolamine + (9Z)-octadecenoyl-CoA = 1,2-di-(9Z-octadecenoyl)-sn-glycero-3-phosphoethanolamine + CoA. It carries out the reaction 1-hexadecanoyl-sn-glycero-3-phosphoethanolamine + (9Z)-octadecenoyl-CoA = 1-hexadecanoyl-2-(9Z-octadecenoyl)-sn-glycero-3-phosphoethanolamine + CoA. It catalyses the reaction 1-(10Z-heptadecenoyl)-sn-glycero-3-phosphoethanolamine + hexadecanoyl-CoA = 1-(10Z-heptadecenoyl)-2-hexadecanoyl-sn-glycero-3-phosphoethanolamine + CoA. The catalysed reaction is 1-(9Z-octadecenoyl)-sn-glycero-3-phospho-L-serine + octadecanoyl-CoA = 1-(9Z-octadecenoyl)-2-octadecanoyl-sn-glycero-3-phospho-L-serine + CoA. The enzyme catalyses 1-(9Z-octadecenoyl)-sn-glycero-3-phospho-L-serine + (9Z)-hexadecenoyl-CoA = 1-(9Z-octadecenoyl)-2-(9Z-hexadecenoyl)-sn-glycero-3-phospho-L-serine + CoA. It carries out the reaction 1-(9Z-octadecenoyl)-sn-glycero-3-phospho-L-serine + (9Z,12Z)-octadecadienoyl-CoA = 1-(9Z-octadecenoyl)-2-(9Z,12Z-octadienoyl)-sn-glycero-3-phospho-L-serine + CoA. It catalyses the reaction 1-hexadecanoyl-sn-glycero-3-phosphocholine + (9Z)-octadecenoyl-CoA = 1-hexadecanoyl-2-(9Z-octadecenoyl)-sn-glycero-3-phosphocholine + CoA. The catalysed reaction is 1-(10Z-heptadecenoyl)-sn-glycero-3-phosphoethanolamine + (9Z)-octadecenoyl-CoA = 1-(10Z-heptadecenoyl)-2-(9Z-octadecenoyl)-sn-glycero-3-phosphoethanolamine + CoA. It functions in the pathway lipid metabolism; phospholipid metabolism. Acyltransferase which catalyzes the transfer of an acyl group from an acyl-CoA towards a lysophospholipid producing a phospholipid and participates in the reacylation step of the phospholipid remodeling pathway also known as the Lands cycle. Acts on lysophosphatidylserine (1-acyl-2-hydroxy-sn-glycero-3-phospho-L-serine or LPS) and lysophosphatidylethanolamine (1-acyl-sn-glycero-3-phosphoethanolamine or LPE), and to a lesser extend lysophosphatidylcholine. Prefers oleoyl-CoA as the acyl donor and 1-oleoyl-LPE as acceptor. May play a role in neurite outgrowth during neuronal differentiation. This Mus musculus (Mouse) protein is Membrane-bound glycerophospholipid O-acyltransferase 1.